A 469-amino-acid chain; its full sequence is Trigger factor (469 aa).

Residues 165-250 (GDRVTIDYIG…VKAVCKSDEL (86 aa)) enclose the PPIase FKBP-type domain. The segment covering 444–460 (DLTEKKPLKKKTAEKVS) has biased composition (basic and acidic residues). Residues 444 to 469 (DLTEKKPLKKKTAEKVSTKKKAPKKS) form a disordered region.

It belongs to the FKBP-type PPIase family. Tig subfamily.

It is found in the cytoplasm. The catalysed reaction is [protein]-peptidylproline (omega=180) = [protein]-peptidylproline (omega=0). Functionally, involved in protein export. Acts as a chaperone by maintaining the newly synthesized protein in an open conformation. Functions as a peptidyl-prolyl cis-trans isomerase. This chain is Trigger factor, found in Bartonella henselae (strain ATCC 49882 / DSM 28221 / CCUG 30454 / Houston 1) (Rochalimaea henselae).